The following is a 117-amino-acid chain: MKHRVKKHRLSRNSSHRMSLICNLSVSIIEHGRLQTTLAKARALRPFIEKLITKARVPDSLSVRRLLLSRIKNEAAVTKLINEVARRYTDRPGGYCRIVKTGYRVGDAAPMAIIEFV.

The protein belongs to the bacterial ribosomal protein bL17 family. In terms of assembly, part of the 50S ribosomal subunit. Contacts protein L32.

The chain is Large ribosomal subunit protein bL17 from Neorickettsia sennetsu (strain ATCC VR-367 / Miyayama) (Ehrlichia sennetsu).